Consider the following 69-residue polypeptide: Large ribosomal subunit protein eL38 (69 aa).

Belongs to the eukaryotic ribosomal protein eL38 family.

In Solanum lycopersicum (Tomato), this protein is Large ribosomal subunit protein eL38 (RPL38).